A 1014-amino-acid chain; its full sequence is Pre-mRNA-processing ATP-dependent RNA helicase prp11 (1014 aa).

Residues 1–11 are compositionally biased toward basic residues; sequence MSRRTRSRSPP. Residues 1 to 149 are disordered; the sequence is MSRRTRSRSP…SRFDRTERVG (149 aa). Composition is skewed to basic and acidic residues over residues 15–87 and 106–121; these read YNRE…EYAR and RHAE…KSDE. The Q motif motif lies at 418–446; it reads TSWSQCGLSAQTISVINSLGYEKPTSIQA. The region spanning 449–627 is the Helicase ATP-binding domain; it reads IPAITSGRDV…RKVLKKPVEI (179 aa). 462-469 provides a ligand contact to ATP; that stretch reads AKTGSGKT. The DEAD box motif lies at 575–578; that stretch reads DEAD. The Helicase C-terminal domain occupies 638–802; sequence EVEQIVEVRP…PVPKELQTLA (165 aa). The tract at residues 815–875 is disordered; it reads KAAGGGFGGK…PEKSTGDPTL (61 aa). Basic and acidic residues-rich tracts occupy residues 827–838 and 855–875; these read SRLDETRNAERK and AEAK…DPTL.

It belongs to the DEAD box helicase family. DDX46/PRP5 subfamily.

The protein resides in the nucleus. The enzyme catalyses ATP + H2O = ADP + phosphate + H(+). ATP-dependent RNA helicase involved in pre-spliceosome/complex A assembly and mRNA splicing. Bridges U1 and U2 snRNPs during pre-spliceosome assembly and enables stable U2 snRNP association with intron RNA. Through its helicase activity probably catalyzes an ATP-dependent conformational change of U2 snRNP. The polypeptide is Pre-mRNA-processing ATP-dependent RNA helicase prp11 (prp11) (Schizosaccharomyces pombe (strain 972 / ATCC 24843) (Fission yeast)).